Reading from the N-terminus, the 276-residue chain is 4-hydroxy-tetrahydrodipicolinate reductase (276 aa).

16-21 lines the NAD(+) pocket; that stretch reads GALGKM. Lys44 serves as a coordination point for NADP(+). Residues 109–111 and 135–138 each bind NAD(+); these read GTT and APNF. His165 (proton donor/acceptor) is an active-site residue. Residue His166 participates in (S)-2,3,4,5-tetrahydrodipicolinate binding. Lys169 serves as the catalytic Proton donor. 175 to 176 contacts (S)-2,3,4,5-tetrahydrodipicolinate; sequence GT.

This sequence belongs to the DapB family.

The protein resides in the cytoplasm. It carries out the reaction (S)-2,3,4,5-tetrahydrodipicolinate + NAD(+) + H2O = (2S,4S)-4-hydroxy-2,3,4,5-tetrahydrodipicolinate + NADH + H(+). The catalysed reaction is (S)-2,3,4,5-tetrahydrodipicolinate + NADP(+) + H2O = (2S,4S)-4-hydroxy-2,3,4,5-tetrahydrodipicolinate + NADPH + H(+). It functions in the pathway amino-acid biosynthesis; L-lysine biosynthesis via DAP pathway; (S)-tetrahydrodipicolinate from L-aspartate: step 4/4. In terms of biological role, catalyzes the conversion of 4-hydroxy-tetrahydrodipicolinate (HTPA) to tetrahydrodipicolinate. The sequence is that of 4-hydroxy-tetrahydrodipicolinate reductase from Thermosynechococcus vestitus (strain NIES-2133 / IAM M-273 / BP-1).